We begin with the raw amino-acid sequence, 186 residues long: Probable peptidoglycan L,D-endopeptidase MepK (186 aa).

Positions 1–30 are cleaved as a signal peptide; sequence MNYVDQNKRKWLSLGGIALGISILPNSVLA. Zn(2+) contacts are provided by His134, Asp141, and His174.

It belongs to the peptidase M15 family. Zn(2+) is required as a cofactor.

It functions in the pathway cell wall biogenesis; cell wall polysaccharide biosynthesis. In terms of biological role, l,D-endopeptidase that cleaves meso-diaminopimelic acid (mDAP)-mDAP cross-links in peptidoglycan. It works in conjunction with other elongation-specific D,D-endopeptidases to make space for efficient incorporation of nascent peptidoglycan strands into the sacculus and thus enable cell wall expansion. The sequence is that of Probable peptidoglycan L,D-endopeptidase MepK from Haemophilus influenzae (strain ATCC 51907 / DSM 11121 / KW20 / Rd).